We begin with the raw amino-acid sequence, 381 residues long: Succinyl-diaminopimelate desuccinylase (381 aa).

H69 contributes to the Zn(2+) binding site. D71 is an active-site residue. D103 contributes to the Zn(2+) binding site. E137 serves as the catalytic Proton acceptor. Zn(2+) is bound by residues E138, E166, and H355.

This sequence belongs to the peptidase M20A family. DapE subfamily. Homodimer. It depends on Zn(2+) as a cofactor. Co(2+) serves as cofactor.

The catalysed reaction is N-succinyl-(2S,6S)-2,6-diaminopimelate + H2O = (2S,6S)-2,6-diaminopimelate + succinate. It functions in the pathway amino-acid biosynthesis; L-lysine biosynthesis via DAP pathway; LL-2,6-diaminopimelate from (S)-tetrahydrodipicolinate (succinylase route): step 3/3. Its function is as follows. Catalyzes the hydrolysis of N-succinyl-L,L-diaminopimelic acid (SDAP), forming succinate and LL-2,6-diaminopimelate (DAP), an intermediate involved in the bacterial biosynthesis of lysine and meso-diaminopimelic acid, an essential component of bacterial cell walls. The protein is Succinyl-diaminopimelate desuccinylase of Rickettsia africae (strain ESF-5).